Consider the following 90-residue polypeptide: MAGFWSKLFSSEEKPSSAQTAKDRLKVIVASEQGLGRRLSQDKIDQMKKEIMQVVSRYVSGVGEQHIQMQVRSEANIEMLEMNINLPEER.

The segment at 1–21 (MAGFWSKLFSSEEKPSSAQTA) is disordered. Basic and acidic residues predominate over residues 10-21 (SSEEKPSSAQTA).

Belongs to the MinE family.

In terms of biological role, prevents the cell division inhibition by proteins MinC and MinD at internal division sites while permitting inhibition at polar sites. This ensures cell division at the proper site by restricting the formation of a division septum at the midpoint of the long axis of the cell. The protein is Cell division topological specificity factor of Acinetobacter baumannii (strain AB307-0294).